The sequence spans 1150 residues: Solute carrier family 12 member 6 (1150 aa).

The segment at 1–108 (MHPPEATTKM…GEHSQLLDDG (108 aa)) is disordered. Over 1-135 (MHPPEATTKM…DEYFDKNLAL (135 aa)) the chain is Cytoplasmic. Residues 28–45 (LSDTSPDLSSRSSSRVRF) are compositionally biased toward low complexity. Ser32 carries the phosphoserine modification. Positions 80 to 101 (DRTSNPQDVTEDPSQNSITGEH) are enriched in polar residues. Phosphoserine is present on Ser120. A discontinuously helical membrane pass occupies residues 136-158 (FEEEMDTRPKVSSLLNRMANYTN). 2 residues coordinate K(+): Ser147 and Ser148. Ser148 is modified (phosphoserine). Asn151 lines the chloride pocket. Residues 159-165 (LTQGAKE) are Extracellular-facing. Residues 161–181 (QGAKEHEEAENITEGKKKPTK) form a disordered region. Residues 163-177 (AKEHEEAENITEGKK) show a composition bias toward basic and acidic residues. Residues 166-188 (HEEAENITEGKKKPTKSPQMGTF) form a helical membrane-spanning segment. The Cytoplasmic segment spans residues 189–211 (MGVYLPCLQNIFGVILFLRLTWV). The chain crosses the membrane as a helical span at residues 212 to 245 (VGTAGILQAFAIVLICCCCTMLTAISMSAIATNG). Residues 246 to 263 (VVPAGGSYFMISRALGPE) are Extracellular-facing. A run of 2 helical transmembrane segments spans residues 264 to 287 (FGGAVGLCFYLGTTFAAAMYILGA) and 288 to 316 (IEIFLVYIVPRAAIFRSDDALKESAAMLN). Tyr283 is a K(+) binding site. Over 317–433 (NMRVYGTAFL…FVHNNVISIQ (117 aa)) the chain is Extracellular. The cysteines at positions 375 and 390 are disulfide-linked. N-linked (GlcNAc...) asparagine glycosylation is found at Asn379, Asn398, Asn411, and Asn417. The cysteines at positions 410 and 420 are disulfide-linked. A helical transmembrane segment spans residues 434–454 (GIPGLASGIITENLWSNYLPK). Residues Ile443, Thr444, and Asn446 each coordinate K(+). 2 residues coordinate chloride: Ile443 and Thr444. Residues Leu447 and Trp448 each contribute to the chloride site. Residues 455–464 (GEIIEKPSAK) lie on the Cytoplasmic side of the membrane. Residues 465–487 (SSDVLGNLNHEYVLADITTSFTL) traverse the membrane as a helical segment. Residues 488–518 (LVGIFFPSVTGIMAGSNRSGDLKDAQKSIPI) are Extracellular-facing. Thr497 lines the K(+) pocket. Residues 519 to 545 (GTILAILTTSFVYLSNVVLFGACIEGV) form a helical membrane-spanning segment. Over 546 to 568 (VLRDKFGDAVKGNLVVGTLSWPS) the chain is Cytoplasmic. 2 helical membrane passes run 569-589 (PWVIVIGSFFSTCGAGLQSLT) and 590-612 (GAPRLLQAIAKDNIIPFLRVFGH). A chloride-binding site is contributed by Ile603. Residues 613-629 (SKANGEPTWALLLTAAI) lie on the Cytoplasmic side of the membrane. The next 2 helical transmembrane spans lie at 630 to 649 (AELGILIASLDLVAPILSMF) and 650 to 665 (FLMCYLFVNLACALQT). Tyr654 lines the chloride pocket. Topologically, residues 666 to 1150 (LLRTPNWRPR…GGSEVITIYS (485 aa)) are cytoplasmic. Positions 682–691 (ALSFMGMSIC) are scissor helix. Ser736 is subject to Phosphoserine. The residue at position 778 (Thr778) is a Phosphothreonine. Ser981 carries the phosphoserine modification. Thr991 bears the Phosphothreonine mark. Phosphoserine occurs at positions 1023, 1029, and 1032. At Thr1048 the chain carries Phosphothreonine. Residue Tyr1121 is modified to Phosphotyrosine.

Belongs to the SLC12A transporter family. K/Cl co-transporter subfamily. Homodimer; adopts a domain-swap conformation at the scissor helices connecting the transmembrane domain and C-terminal domain. Heterodimer with K-Cl cotransporter SLC12A5. Interacts (via C-terminus) with CKB; the interaction may be required for potassium-chloride cotransport activity. In terms of processing, phosphorylated, phosphorylation regulates transporter activity. Phosphorylated at Thr-991 and Thr-1048 by OXSR1/OSR1 and STK39/SPAK downstream of WNK kinases (WNK1, WNK2, WNK3 or WNK4), inhibiting the potassium-chloride cotransport activity. N-glycosylated. Expressed in hippocampus and corpus callosum (at protein level). Highly expressed throughout the brain and detected at lower levels in kidney. Highly expressed in highly myelinated white matter of the brain, but not in gray matter. Detected in the corpus callosum, in packed cell layers of the hippocampus and in Purkinje neurons within the cerebellum. Highly expressed in white matter in the spinal cord, but not in dorsal root ganglia or sciatic nerve. Colocalizes with the oligodendrocyte marker CNP. Expressed in hippocampus in CA1, and to a lesser extent CA3 pyramidal cells. Also expressed in cortex, mostly in large neurons and in the large cerebellar Purkinje cells. As to expression, highly expressed in kidney, but not detected in brain.

Its subcellular location is the cell membrane. It localises to the basolateral cell membrane. It catalyses the reaction K(+)(in) + chloride(in) = K(+)(out) + chloride(out). Its activity is regulated as follows. Inhibited following phosphorylation by OXSR1/OSR1 and STK39/SPAK: phosphorylation takes place downstream of WNK kinases (WNK1, WNK2, WNK3 or WNK4) in response to hyperosmotic stress and subsequent cell shrinkage. Mediates electroneutral potassium-chloride cotransport when activated by cell swelling. May contribute to cell volume homeostasis in single cells. Functionally, mediates electroneutral potassium-chloride cotransport when activated by cell swelling. May contribute to cell volume homeostasis in single cells. In Mus musculus (Mouse), this protein is Solute carrier family 12 member 6 (Slc12a6).